The following is an 807-amino-acid chain: Glycerol-3-phosphate acyltransferase (807 aa).

The HXXXXD motif signature appears at 308–313; it reads CHRSHM.

It belongs to the GPAT/DAPAT family.

The protein localises to the cell inner membrane. It carries out the reaction sn-glycerol 3-phosphate + an acyl-CoA = a 1-acyl-sn-glycero-3-phosphate + CoA. It functions in the pathway phospholipid metabolism; CDP-diacylglycerol biosynthesis; CDP-diacylglycerol from sn-glycerol 3-phosphate: step 1/3. The sequence is that of Glycerol-3-phosphate acyltransferase from Shewanella amazonensis (strain ATCC BAA-1098 / SB2B).